The following is a 163-amino-acid chain: Globin CTT-Z (163 aa).

A signal peptide spans 1–16; it reads MKFFAVLALCIVGAIA. The 145-residue stretch at 18–162 folds into the Globin domain; that stretch reads PLTSDEAALV…VYTAVFQIVT (145 aa). Residues His-76 and His-111 each coordinate heme b.

This sequence belongs to the globin family.

The sequence is that of Globin CTT-Z (CTT-Z) from Chironomus thummi piger (Midge).